The following is a 222-amino-acid chain: Phosphoribosylformylglycinamidine synthase subunit PurQ (222 aa).

Residues 3 to 222 (AAVLVFPGSN…ASLAAALVAA (220 aa)) form the Glutamine amidotransferase type-1 domain. The active-site Nucleophile is cysteine 86. Residues histidine 194 and glutamate 196 contribute to the active site.

As to quaternary structure, part of the FGAM synthase complex composed of 1 PurL, 1 PurQ and 2 PurS subunits.

The protein resides in the cytoplasm. It carries out the reaction N(2)-formyl-N(1)-(5-phospho-beta-D-ribosyl)glycinamide + L-glutamine + ATP + H2O = 2-formamido-N(1)-(5-O-phospho-beta-D-ribosyl)acetamidine + L-glutamate + ADP + phosphate + H(+). It catalyses the reaction L-glutamine + H2O = L-glutamate + NH4(+). It participates in purine metabolism; IMP biosynthesis via de novo pathway; 5-amino-1-(5-phospho-D-ribosyl)imidazole from N(2)-formyl-N(1)-(5-phospho-D-ribosyl)glycinamide: step 1/2. Part of the phosphoribosylformylglycinamidine synthase complex involved in the purines biosynthetic pathway. Catalyzes the ATP-dependent conversion of formylglycinamide ribonucleotide (FGAR) and glutamine to yield formylglycinamidine ribonucleotide (FGAM) and glutamate. The FGAM synthase complex is composed of three subunits. PurQ produces an ammonia molecule by converting glutamine to glutamate. PurL transfers the ammonia molecule to FGAR to form FGAM in an ATP-dependent manner. PurS interacts with PurQ and PurL and is thought to assist in the transfer of the ammonia molecule from PurQ to PurL. The polypeptide is Phosphoribosylformylglycinamidine synthase subunit PurQ (Jannaschia sp. (strain CCS1)).